A 352-amino-acid chain; its full sequence is Putative pectinesterase 11 (352 aa).

The helical transmembrane segment at 13–35 threads the bilayer; sequence ANYHHIIIINIFILSSITSSSMA. Asn-76 carries N-linked (GlcNAc...) asparagine glycosylation. The active-site Proton donor is Asp-175. Residue Asp-196 is the Nucleophile of the active site. A glycan (N-linked (GlcNAc...) asparagine) is linked at Asn-218. Positions 252 and 254 each coordinate substrate. The tract at residues 332-352 is disordered; the sequence is LRPAPSHFKNAPKQTQNKEIN. Over residues 343 to 352 the composition is skewed to polar residues; that stretch reads PKQTQNKEIN.

Belongs to the pectinesterase family.

Its subcellular location is the membrane. The enzyme catalyses [(1-&gt;4)-alpha-D-galacturonosyl methyl ester](n) + n H2O = [(1-&gt;4)-alpha-D-galacturonosyl](n) + n methanol + n H(+). It functions in the pathway glycan metabolism; pectin degradation; 2-dehydro-3-deoxy-D-gluconate from pectin: step 1/5. Acts in the modification of cell walls via demethylesterification of cell wall pectin. The sequence is that of Putative pectinesterase 11 (PME11) from Arabidopsis thaliana (Mouse-ear cress).